A 216-amino-acid polypeptide reads, in one-letter code: Snake venom metalloproteinase HT-1 (216 aa).

A Disintegrin domain is found at P8–N94. Positions 10, 13, 15, 17, 20, and 23 each coordinate Ca(2+). Cystine bridges form between C11–C40, C22–C35, C24–C30, C34–C57, C48–C54, C53–C79, C66–C86, C73–C105, C98–C110, C117–C167, C132–C178, C145–C155, C162–C204, and C198–C209. A D/ECD-tripeptide motif is present at residues E72–D74. N175 carries N-linked (GlcNAc...) asparagine glycosylation.

The protein belongs to the venom metalloproteinase (M12B) family. P-III subfamily. P-IIIa sub-subfamily. Monomer. Zn(2+) serves as cofactor. Expressed by the venom gland.

The protein resides in the secreted. Its function is as follows. Zinc protease from snake venom that induces hemorrhage. The sequence is that of Snake venom metalloproteinase HT-1 from Crotalus ruber ruber (Red diamond rattlesnake).